An 86-amino-acid chain; its full sequence is V-type proton ATPase subunit e (86 aa).

Residues 1 to 21 (MGILIPLVSVSAFWAIIGFGG) traverse the membrane as a helical segment. Residues 22–32 (PWIVPKGPNRG) lie on the Cytoplasmic side of the membrane. The chain crosses the membrane as a helical span at residues 33–53 (IIQLMIIMTAVCCWMFWIMVF). The Lumenal portion of the chain corresponds to 54 to 86 (LHQLNPLIGPQINVKTIRWISEKWGDAPNVINN).

Belongs to the V-ATPase e1/e2 subunit family. As to quaternary structure, V-ATPase is a heteromultimeric enzyme made up of two complexes: the ATP-hydrolytic V1 complex and the proton translocation V0 complex. The V1 complex consists of three catalytic AB heterodimers that form a heterohexamer, three peripheral stalks each consisting of EG heterodimers, one central rotor including subunits D and F, and the regulatory subunits C and H. The proton translocation complex V0 consists of the proton transport subunit a, a ring of proteolipid subunits c9c'', rotary subunit d, subunits e and f, and the accessory subunits vah-19/Ac45 and vah-20/PRR.

Its subcellular location is the apical cell membrane. In terms of biological role, subunit of the V0 complex of vacuolar(H+)-ATPase (V-ATPase), a multisubunit enzyme composed of a peripheral complex (V1) that hydrolyzes ATP and a membrane integral complex (V0) that translocates protons. V-ATPase is responsible for acidifying and maintaining the pH of intracellular compartments and in some cell types, is targeted to the plasma membrane, where it is responsible for acidifying the extracellular environment. During embryonic development, the V-ATPase is required to repress fusion of epidermal cells probably by negatively regulating eff-1-mediated cell fusion. This is V-type proton ATPase subunit e from Caenorhabditis elegans.